The following is a 223-amino-acid chain: MLCQYLPPDDRPPSSAPPLLAAHALTYSRNATPILGPLHFHINPGEALIVQGPNGIGKTTLLRILAGLLHSDSGHIDINTHHNTTAPERTRHIAYLSHLPGLKQDLSALENLHFLNALHGYHPQRTPSNALTLVGLTDHAQTLVRQLSAGQKKRLSLAQLWLSPAPLWLLDEPYANLDPEGITLLNHILTAHIHTQGGTLLTTPGARPTLPVPTRLLHLKKAP.

One can recognise an ABC transporter domain in the interval Leu20–Ala222. Gly52–Thr59 serves as a coordination point for ATP.

Belongs to the ABC transporter superfamily. CcmA exporter (TC 3.A.1.107) family. The complex is composed of two ATP-binding proteins (CcmA) and two transmembrane proteins (CcmB).

The protein localises to the cell inner membrane. It catalyses the reaction heme b(in) + ATP + H2O = heme b(out) + ADP + phosphate + H(+). Part of the ABC transporter complex CcmAB involved in the biogenesis of c-type cytochromes; once thought to export heme, this seems not to be the case, but its exact role is uncertain. Responsible for energy coupling to the transport system. In Xylella fastidiosa (strain 9a5c), this protein is Cytochrome c biogenesis ATP-binding export protein CcmA.